The sequence spans 322 residues: Ferredoxin--NADP reductase (322 aa).

FAD-binding residues include D34, Q42, Y47, V87, F120, D279, and T320.

It belongs to the ferredoxin--NADP reductase type 2 family. In terms of assembly, homodimer. FAD is required as a cofactor.

It catalyses the reaction 2 reduced [2Fe-2S]-[ferredoxin] + NADP(+) + H(+) = 2 oxidized [2Fe-2S]-[ferredoxin] + NADPH. The sequence is that of Ferredoxin--NADP reductase from Streptococcus pneumoniae (strain Hungary19A-6).